Consider the following 67-residue polypeptide: Small ribosomal subunit protein bS21 (67 aa).

This sequence belongs to the bacterial ribosomal protein bS21 family.

This Aquifex aeolicus (strain VF5) protein is Small ribosomal subunit protein bS21 (rpsU).